The following is a 300-amino-acid chain: DNA repair protein PprA (300 aa).

At Thr88 the chain carries Phosphothreonine. Ser128 carries the post-translational modification Phosphoserine. A Phosphothreonine modification is found at Thr160.

In terms of processing, phosphorylated by RqkA in vitro. Phosphorylated primarily at Thr-88, and to a little extent at Ser-128 and Thr-160.

With respect to regulation, phosphorylation increases DNA binding affinity. Its function is as follows. dsDNA-binding protein that contributes to the ionizing radiation resistance of D.radiodurans. Plays a role in DNA repair and genome reconstitution, and is necessary for recovery from severe genomic fragmentation as a result of exposure to severe levels of ionizing radiation. In vitro, binds to double-stranded DNA carrying strand breaks and stimulates the DNA end-joining reaction catalyzed by DNA ligases. Thus, PprA plays a critical role in a non-homologous end-joining (NHEJ) pathway for the repair of radiation-induced DNA double-strands breaks. Cannot bind to dsDNA without strand breaks or single-stranded DNA. The polypeptide is DNA repair protein PprA (pprA) (Deinococcus radiodurans (strain ATCC 13939 / DSM 20539 / JCM 16871 / CCUG 27074 / LMG 4051 / NBRC 15346 / NCIMB 9279 / VKM B-1422 / R1)).